The primary structure comprises 526 residues: Probable polyol transporter 4 (526 aa).

Disordered regions lie at residues 1–21 (MMKN…AVSV) and 28–47 (YQRM…AEAR). The segment covering 29 to 47 (QRMDSDAEESQNHREAEAR) has biased composition (basic and acidic residues). Transmembrane regions (helical) follow at residues 63–83 (SLNN…VLFI), 92–112 (VQTE…SLAG), 125–145 (MALA…APSF), 153–173 (TLAG…IAEI), 180–200 (GFFT…GYVS), 215–235 (IMLA…CVIP), 300–320 (MLIV…DATV), 340–360 (AATV…TFLI), 371–391 (VSTI…TFLG), 395–415 (LGIT…SIGM), 437–457 (ALGA…FLSV), and 465–485 (GTFF…YVLV).

Belongs to the major facilitator superfamily. Sugar transporter (TC 2.A.1.1) family.

It is found in the membrane. In terms of biological role, plasma membrane sugar-proton symporter. In Arabidopsis thaliana (Mouse-ear cress), this protein is Probable polyol transporter 4 (PLT4).